The following is an 883-amino-acid chain: Phosphoenolpyruvate carboxylase (883 aa).

Catalysis depends on residues His-138 and Lys-546.

This sequence belongs to the PEPCase type 1 family. Mg(2+) is required as a cofactor.

The catalysed reaction is oxaloacetate + phosphate = phosphoenolpyruvate + hydrogencarbonate. Forms oxaloacetate, a four-carbon dicarboxylic acid source for the tricarboxylic acid cycle. This chain is Phosphoenolpyruvate carboxylase, found in Salmonella gallinarum (strain 287/91 / NCTC 13346).